Consider the following 150-residue polypeptide: T-complex protein 1 subunit beta (150 aa).

D35 contributes to the Mg(2+) binding site. Residues G36, T37, T38, and S39 each coordinate ADP. Positions 36, 37, and 38 each coordinate ATP.

Belongs to the TCP-1 chaperonin family. In terms of assembly, component of the chaperonin-containing T-complex (TRiC), a hexadecamer composed of two identical back-to-back stacked rings enclosing a protein folding chamber. Each ring is made up of eight different subunits: TCP1/CCT1, CCT2, CCT3, CCT4, CCT5, CCT6A/CCT6, CCT7, CCT8. Interacts with PACRG. Interacts with FLCN. Interacts with DLEC1. Interacts with SVEP1.

The protein localises to the cytoplasm. It carries out the reaction ATP + H2O = ADP + phosphate + H(+). In terms of biological role, component of the chaperonin-containing T-complex (TRiC), a molecular chaperone complex that assists the folding of actin, tubulin and other proteins upon ATP hydrolysis. The TRiC complex mediates the folding of WRAP53/TCAB1, thereby regulating telomere maintenance. As part of the TRiC complex may play a role in the assembly of BBSome, a complex involved in ciliogenesis regulating transports vesicles to the cilia. This chain is T-complex protein 1 subunit beta, found in Mesocricetus auratus (Golden hamster).